The following is a 228-amino-acid chain: UPF0173 metal-dependent hydrolase PTH_1415 (228 aa).

This sequence belongs to the UPF0173 family.

The protein is UPF0173 metal-dependent hydrolase PTH_1415 of Pelotomaculum thermopropionicum (strain DSM 13744 / JCM 10971 / SI).